The following is a 100-amino-acid chain: Small ribosomal subunit protein bS21 (100 aa).

The span at 37–52 shows a compositional bias: basic and acidic residues; it reads EKPSEKKAREKAEAVR. Positions 37 to 100 are disordered; it reads EKPSEKKARE…GAGAGPRGPR (64 aa). Residues 53-62 are compositionally biased toward basic residues; it reads RARKLARKKL. Positions 84–100 are enriched in gly residues; the sequence is GAAGAGAGAGAGPRGPR.

Belongs to the bacterial ribosomal protein bS21 family.

The polypeptide is Small ribosomal subunit protein bS21 (Rhodopseudomonas palustris (strain BisB5)).